The primary structure comprises 277 residues: Digeranylgeranylglyceryl phosphate synthase (277 aa).

The next 7 helical transmembrane spans lie at 16 to 36 (ILAG…IPSI), 40 to 60 (GLVF…NDYF), 101 to 121 (FLGV…FIYA), 129 to 149 (FIGN…GALG), 153 to 173 (VGLA…REIM), 205 to 225 (IFGV…IGLG), and 257 to 277 (LKIA…TKGV).

This sequence belongs to the UbiA prenyltransferase family. DGGGP synthase subfamily. It depends on Mg(2+) as a cofactor.

The protein localises to the cell membrane. The enzyme catalyses sn-3-O-(geranylgeranyl)glycerol 1-phosphate + (2E,6E,10E)-geranylgeranyl diphosphate = 2,3-bis-O-(geranylgeranyl)-sn-glycerol 1-phosphate + diphosphate. It participates in membrane lipid metabolism; glycerophospholipid metabolism. In terms of biological role, prenyltransferase that catalyzes the transfer of the geranylgeranyl moiety of geranylgeranyl diphosphate (GGPP) to the C2 hydroxyl of (S)-3-O-geranylgeranylglyceryl phosphate (GGGP). This reaction is the second ether-bond-formation step in the biosynthesis of archaeal membrane lipids. In Pyrococcus abyssi (strain GE5 / Orsay), this protein is Digeranylgeranylglyceryl phosphate synthase.